A 456-amino-acid chain; its full sequence is Peripherin (456 aa).

Polar residues predominate over residues 1-14; it reads MSHSGLRSTSTSYR. Residues 1 to 55 are disordered; sequence MSHSGLRSTSTSYRRTLGSSPVPSSYSSSSRLSTSRHFGSPSPGPSSRSSSSAFR. The head stretch occupies residues 1 to 90; the sequence is MSHSGLRSTS…FLTTRSNEKA (90 aa). The span at 16–55 shows a compositional bias: low complexity; sequence TLGSSPVPSSYSSSSRLSTSRHFGSPSPGPSSRSSSSAFR. The IF rod domain occupies 88–397; that stretch reads EKAELQELND…KLLEGEESRI (310 aa). The interval 91 to 123 is coil 1A; it reads ELQELNDRFASFIEKVRYLEQQNAVLVTEINQA. A linker 1 region spans residues 124–134; sequence RSKEPTRASDL. The coil 1B stretch occupies residues 135-230; sequence CQQELRELRK…KLHEEELNDV (96 aa). Residues 231–252 are linker 2; sequence QVSVQAQPVHMEIEAAKQPDLT. The tract at residues 253 to 395 is coil 2; that stretch reads SALRDIRSQY…YRKLLEGEES (143 aa). Positions 396–456 are tail; sequence RIAVPIHSLT…RKEQSSEGEK (61 aa). The disordered stretch occupies residues 411-456; it reads SPAAPEIDPSTETHTRKTVAIKTIETRDGEQVVTESRKEQSSEGEK. The span at 434 to 456 shows a compositional bias: basic and acidic residues; that stretch reads IETRDGEQVVTESRKEQSSEGEK.

The protein belongs to the intermediate filament family. As to quaternary structure, forms homodimers (in vitro). Homopolymerizes into a filamentous network (in vitro).

It is found in the cytoplasm. It localises to the cytoskeleton. Its subcellular location is the cell projection. The protein localises to the axon. The protein resides in the perikaryon. Class-III neuronal intermediate filament protein. My form an independent structural network without the involvement of other neurofilaments or may cooperate with other neuronal intermediate filament proteins to form a filamentous network. This is Peripherin (prph) from Xenopus laevis (African clawed frog).